The following is a 255-amino-acid chain: Electron transfer flavoprotein beta subunit lysine methyltransferase (255 aa).

The transit peptide at 1–32 directs the protein to the mitochondrion; sequence MAFSLCWKAPRSQWSFLQALNSGFPLFPWRTV.

It belongs to the methyltransferase superfamily. ETFBKMT family. Interacts with HSPD1; this protein may possibly be a methylation substrate.

The protein resides in the cytoplasm. It localises to the mitochondrion matrix. It catalyses the reaction L-lysyl-[protein] + 3 S-adenosyl-L-methionine = N(6),N(6),N(6)-trimethyl-L-lysyl-[protein] + 3 S-adenosyl-L-homocysteine + 3 H(+). Functionally, protein-lysine methyltransferase that selectively trimethylates the flavoprotein ETFB in mitochondria. Thereby, may negatively regulate the function of ETFB in electron transfer from Acyl-CoA dehydrogenases to the main respiratory chain. This is Electron transfer flavoprotein beta subunit lysine methyltransferase from Rattus norvegicus (Rat).